Consider the following 330-residue polypeptide: Probable aldo-keto reductase 6 (330 aa).

The Proton donor role is filled by Tyr-64. A substrate-binding site is contributed by His-132. Residue 211 to 221 (SPLGRGFLGLP) participates in NADP(+) binding.

Belongs to the aldo/keto reductase family.

The sequence is that of Probable aldo-keto reductase 6 from Arabidopsis thaliana (Mouse-ear cress).